The primary structure comprises 446 residues: GRAM domain-containing protein 2B (446 aa).

Methionine 1 bears the N-acetylmethionine mark. The disordered stretch occupies residues 1 to 120 (MVKKRLPSND…RKKSSSSSQY (120 aa)). Low complexity predominate over residues 29–43 (SRSSTDSPSSVFFSS). Positions 95 to 113 (DKNDCKTESKNDPKTERKK) are enriched in basic and acidic residues. One can recognise a GRAM domain in the interval 124 to 191 (MHFHKLFLSV…FSVTLIKKTK (68 aa)). Polar residues predominate over residues 234-247 (TSVGNSPNPSSAEN). A disordered region spans residues 234-253 (TSVGNSPNPSSAENSFRADR). Phosphoserine is present on residues serine 239, serine 256, and serine 266. Residues 276-298 (RQDMEGYSSSGSQTPESENSRDF) form a disordered region. Residues 282-292 (YSSSGSQTPES) are compositionally biased toward polar residues.

The polypeptide is GRAM domain-containing protein 2B (GRAMD2B) (Pongo abelii (Sumatran orangutan)).